The following is a 414-amino-acid chain: Gamma-glutamyl phosphate reductase (414 aa).

Belongs to the gamma-glutamyl phosphate reductase family.

The protein localises to the cytoplasm. It carries out the reaction L-glutamate 5-semialdehyde + phosphate + NADP(+) = L-glutamyl 5-phosphate + NADPH + H(+). The protein operates within amino-acid biosynthesis; L-proline biosynthesis; L-glutamate 5-semialdehyde from L-glutamate: step 2/2. Its function is as follows. Catalyzes the NADPH-dependent reduction of L-glutamate 5-phosphate into L-glutamate 5-semialdehyde and phosphate. The product spontaneously undergoes cyclization to form 1-pyrroline-5-carboxylate. This is Gamma-glutamyl phosphate reductase from Clostridium botulinum (strain Alaska E43 / Type E3).